The sequence spans 319 residues: Free fatty acid receptor 3 (319 aa).

Over 1 to 15 (MDTSFFPGNHWLFFS) the chain is Extracellular. The helical transmembrane segment at 16 to 36 (VDLLVFLVGLPLNVMALVVFV) threads the bilayer. The Cytoplasmic portion of the chain corresponds to 37-43 (NKLRRRP). A helical membrane pass occupies residues 44–64 (VAVDLLLLNLTISDLLLLLFL). Residues 65–98 (PFRIVEAACGMKWILPFIFCPLSGFLFFTTIYLT) lie on the Extracellular side of the membrane. Cys84 and Cys165 are oxidised to a cystine. The chain crosses the membrane as a helical span at residues 99–119 (SLFLMTVSIERFLSVAYPLWY). Residues 120 to 127 (KTRPRLAQ) lie on the Cytoplasmic side of the membrane. Residues 128–148 (AGLVSGICWFLASAHCSVIYV) form a helical membrane-spanning segment. At 149-183 (TEYWGNATYSQGTNGTCYLEFREDQLAILLPVRLE) the chain is on the extracellular side. Residues 184–206 (MAVVLFMVPLCITSYCYSRLVWI) traverse the membrane as a helical segment. Residues 207–218 (LSQGASRRRRKR) lie on the Cytoplasmic side of the membrane. Residues 219–239 (VMGLLVATLLIFFVCFGPYNM) traverse the membrane as a helical segment. Topologically, residues 240-254 (SHVVGYVRGESPTWR) are extracellular. A helical membrane pass occupies residues 255 to 275 (SYVLLLSTLNSCIDPLVFYFS). The Cytoplasmic segment spans residues 276–319 (SSKFQADFHQLLSRLIRACVPWTQEVSLELKVKNGEEPSKECPS).

This sequence belongs to the G-protein coupled receptor 1 family. Expressed in the sympathetic nervous system.

Its subcellular location is the cell membrane. Its function is as follows. G protein-coupled receptor that is activated by a major product of dietary fiber digestion, the short chain fatty acids (SCFAs), and that plays a role in the regulation of whole-body energy homeostasis and in intestinal immunity. In omnivorous mammals, the short chain fatty acids acetate, propionate and butyrate are produced primarily by the gut microbiome that metabolizes dietary fibers. SCFAs serve as a source of energy but also act as signaling molecules. That G protein-coupled receptor is probably coupled to the pertussis toxin-sensitive, G(i/o)-alpha family of G proteins. Its activation results in the formation of inositol 1,4,5-trisphosphate, the mobilization of intracellular calcium, the phosphorylation of the MAPK3/ERK1 and MAPK1/ERK2 kinases and the inhibition of intracellular cAMP accumulation. Activated by SCFAs and by beta-hydroxybutyrate, a ketone body produced by the liver upon starvation, it inhibits N-type calcium channels and modulates the activity of sympathetic neurons through a signaling cascade involving the beta and gamma subunits of its coupled G protein, phospholipase C and MAP kinases. Thereby, it may regulate energy expenditure through the control of the sympathetic nervous system that controls for instance heart rate. Upon activation by SCFAs accumulating in the intestine, it may also signal to the brain via neural circuits which in turn would regulate intestinal gluconeogenesis. May also control the production of hormones involved in whole-body energy homeostasis. May for instance, regulate blood pressure through renin secretion. May also regulate secretion of the PYY peptide by enteroendocrine cells and control gut motility, intestinal transit rate, and the harvesting of energy from SCFAs produced by gut microbiota. May also indirectly regulate the production of LEP/Leptin, a hormone acting on the CNS to inhibit food intake, in response to the presence of short-chain fatty acids in the intestine. Finally, may also play a role in glucose homeostasis. Besides its role in energy homeostasis, may play a role in intestinal immunity. May mediate the activation of the inflammatory and immune response by SCFAs in the gut, regulating the rapid production of chemokines and cytokines by intestinal epithelial cells. In Rattus norvegicus (Rat), this protein is Free fatty acid receptor 3 (Ffar3).